The primary structure comprises 498 residues: Membrane-bound lytic murein transglycosylase F (498 aa).

A signal peptide spans 1-29; that stretch reads MFFKPDFRPRCAKWLIATGLFLMLGACVE. The tract at residues 30–267 is non-LT domain; the sequence is KPTTLERVKE…RLKDRYYGHV (238 aa). Positions 268 to 498 are LT domain; that stretch reads DVLGYVGAYT…SSSSTDESPL (231 aa). Glu-314 is an active-site residue. The interval 464–498 is disordered; sequence VADGNLHVPGVDKTQPPVPPASPVPSSSSTDESPL.

This sequence in the N-terminal section; belongs to the bacterial solute-binding protein 3 family. In the C-terminal section; belongs to the transglycosylase Slt family.

The protein resides in the cell outer membrane. It carries out the reaction Exolytic cleavage of the (1-&gt;4)-beta-glycosidic linkage between N-acetylmuramic acid (MurNAc) and N-acetylglucosamine (GlcNAc) residues in peptidoglycan, from either the reducing or the non-reducing ends of the peptidoglycan chains, with concomitant formation of a 1,6-anhydrobond in the MurNAc residue.. Functionally, murein-degrading enzyme that degrades murein glycan strands and insoluble, high-molecular weight murein sacculi, with the concomitant formation of a 1,6-anhydromuramoyl product. Lytic transglycosylases (LTs) play an integral role in the metabolism of the peptidoglycan (PG) sacculus. Their lytic action creates space within the PG sacculus to allow for its expansion as well as for the insertion of various structures such as secretion systems and flagella. This chain is Membrane-bound lytic murein transglycosylase F, found in Pseudomonas syringae pv. syringae (strain B728a).